A 440-amino-acid chain; its full sequence is L-seryl-tRNA(Sec) selenium transferase (440 aa).

N6-(pyridoxal phosphate)lysine is present on Lys-282.

This sequence belongs to the SelA family. The cofactor is pyridoxal 5'-phosphate.

The protein localises to the cytoplasm. It catalyses the reaction L-seryl-tRNA(Sec) + selenophosphate + H(+) = L-selenocysteinyl-tRNA(Sec) + phosphate. Its pathway is aminoacyl-tRNA biosynthesis; selenocysteinyl-tRNA(Sec) biosynthesis; selenocysteinyl-tRNA(Sec) from L-seryl-tRNA(Sec) (bacterial route): step 1/1. In terms of biological role, converts seryl-tRNA(Sec) to selenocysteinyl-tRNA(Sec) required for selenoprotein biosynthesis. The protein is L-seryl-tRNA(Sec) selenium transferase of Campylobacter jejuni subsp. doylei (strain ATCC BAA-1458 / RM4099 / 269.97).